Here is a 649-residue protein sequence, read N- to C-terminus: Acetyl-coenzyme A synthetase (649 aa).

CoA is bound by residues arginine 189–lysine 192, threonine 311, and asparagine 335. Residues glycine 387 to proline 389, aspartate 411 to threonine 416, aspartate 500, and arginine 515 contribute to the ATP site. Serine 523 contacts CoA. An ATP-binding site is contributed by arginine 526. 3 residues coordinate Mg(2+): valine 537, histidine 539, and valine 542. Position 584 (arginine 584) interacts with CoA. Lysine 609 is subject to N6-acetyllysine.

Belongs to the ATP-dependent AMP-binding enzyme family. Requires Mg(2+) as cofactor. Acetylated. Deacetylation by the SIR2-homolog deacetylase activates the enzyme.

It carries out the reaction acetate + ATP + CoA = acetyl-CoA + AMP + diphosphate. Functionally, catalyzes the conversion of acetate into acetyl-CoA (AcCoA), an essential intermediate at the junction of anabolic and catabolic pathways. AcsA undergoes a two-step reaction. In the first half reaction, AcsA combines acetate with ATP to form acetyl-adenylate (AcAMP) intermediate. In the second half reaction, it can then transfer the acetyl group from AcAMP to the sulfhydryl group of CoA, forming the product AcCoA. The sequence is that of Acetyl-coenzyme A synthetase from Sinorhizobium medicae (strain WSM419) (Ensifer medicae).